Reading from the N-terminus, the 292-residue chain is Protein SETSIP (292 aa).

A compositionally biased stretch (low complexity) spans 1–11 (MAPKRQSPLPL). Disordered regions lie at residues 1-43 (MAPK…EQQE) and 158-292 (LNES…GEDD). Residues 35-78 (KKGEKEQQEAIEHIDEVQNEIDRLNEQDSEEILKVEQKYNKLRQ) adopt a coiled-coil conformation. Residues 237–292 (DMDDEEGGEDDDDDDDDGDEGEEELEDIDEGDEDEGEEDEDDDEGEEGEEDEGEDD) are compositionally biased toward acidic residues.

It belongs to the nucleosome assembly protein (NAP) family. In terms of tissue distribution, expressed in endothelial cell (EC) and protein-induced pluripotent stem (PiPS) endothelial cell (EC) (at protein level).

It is found in the cytoplasm. It localises to the nucleus. Plays a role as a transcriptional activator involved in the early stage of somatic cell reprogramming. Promotes the differentiation of protein-induced pluripotent stem (PiPS) cells into endothelial cells and the formation of vascular-like tubes (in vitro). Involved in the transcription induction of vascular endothelial-cadherin (VE-cadherin) expression. Associates to the VE-cadherin gene promoter. This is Protein SETSIP (SETSIP) from Homo sapiens (Human).